An 800-amino-acid chain; its full sequence is MLLSLNWLREFVPYTGTAQELGDRLTMLGLELEEIIRPFDAIADIVVGHVLECGRHPEADKLSVCRVDVGTEVLDIVCGAPNVAAGQKVPVAKVGVTMPSGLKIKKAKLRGQPSCGMICSESELELSDESDGIMVLPQDSVPGVRLVDLLQLDDTVLDISITPNRADCLSVLGLAREVALAFDLPLTMPQLELREQGEDAGSDVTIAIADGAQCPVYQGRIIEGISTCPSPLWMRHRLKSVGVRPISAIVDVTNYILMELGQPLHAFDLDLLEGARIVVETAAEGERFTTLDGQERVLKASDLLIRDGAKAVALAGVMGGANTEINDASRRVFLECAVFKPATIRRTARRLGLSSESSYRFERGVDQVLSTFAMNRAAQLMCELSGGVLRPGVCRAEPAPWQAAQLRFRPARAAALLGISLDDGFCRETLQKLGCTLSGADTPEWTVTAPSHRHDLEREADLIEEVGRVYGMDNIPPVLPKVSKPLEQGRTDSEYEFWARIKAWGRGLGLNEAVNYSFVGHKDLDFLGLPAGNRISIMNPLTSEQDVLRTELAPGLLNTLRHNLAQGSTGLQVFELAHIFEADQSSDTTARESGRLGLLVYGQRYQDGWPRREEDAGYEDLKGIVEHLLRVLNLGPAAFTLRKDHSWLLPCVEIRVGSVCAGVAGRVKPDIADAYHARKDVWMAEIDLDALRTLCRDVAVQFSALPVFPPVKRDITVMAPASVPVSAVTDHVRGMSLKLFSDIVLVDVFEPETPEGGTPERNLTFRLTFRHAERTLKDKEVDKERDKVAESLTEALGVRI.

Residues 39–147 (FDAIADIVVG…QDSVPGVRLV (109 aa)) form the tRNA-binding domain. Positions 401-477 (WQAAQLRFRP…RVYGMDNIPP (77 aa)) constitute a B5 domain. Positions 455, 461, 464, and 465 each coordinate Mg(2+). The region spanning 706–800 (PVFPPVKRDI…SLTEALGVRI (95 aa)) is the FDX-ACB domain.

Belongs to the phenylalanyl-tRNA synthetase beta subunit family. Type 1 subfamily. In terms of assembly, tetramer of two alpha and two beta subunits. Mg(2+) is required as a cofactor.

It is found in the cytoplasm. It catalyses the reaction tRNA(Phe) + L-phenylalanine + ATP = L-phenylalanyl-tRNA(Phe) + AMP + diphosphate + H(+). The protein is Phenylalanine--tRNA ligase beta subunit of Oleidesulfovibrio alaskensis (strain ATCC BAA-1058 / DSM 17464 / G20) (Desulfovibrio alaskensis).